The following is a 188-amino-acid chain: Inosine triphosphate pyrophosphatase (188 aa).

7 to 12 (TGNAGK) lines the ITP pocket. Residue E36 coordinates Mg(2+). Residues K48, 64-65 (DT), K81, 140-143 (FGWN), K163, and 168-169 (HR) contribute to the ITP site.

This sequence belongs to the HAM1 NTPase family. Homodimer. Requires Mg(2+) as cofactor. Mn(2+) serves as cofactor.

It is found in the cytoplasm. It localises to the nucleus. It catalyses the reaction ITP + H2O = IMP + diphosphate + H(+). It carries out the reaction dITP + H2O = dIMP + diphosphate + H(+). The enzyme catalyses XTP + H2O = XMP + diphosphate + H(+). Functionally, pyrophosphatase that hydrolyzes non-canonical purine nucleotides such as inosine triphosphate (ITP), deoxyinosine triphosphate (dITP) or xanthosine 5'-triphosphate (XTP) to their respective monophosphate derivatives. The enzyme does not distinguish between the deoxy- and ribose forms. Probably excludes non-canonical purines from RNA and DNA precursor pools, thus preventing their incorporation into RNA and DNA and avoiding chromosomal lesions. The protein is Inosine triphosphate pyrophosphatase of Yarrowia lipolytica (strain CLIB 122 / E 150) (Yeast).